Consider the following 243-residue polypeptide: CRISPR-associated endoribonuclease Cas6 (243 aa).

It belongs to the CRISPR-associated endoribonuclease Cas6 family. In terms of assembly, part of the Csm effector complex that includes at least Cas10(1), Csm2(3), Csm3(5), Csm4(1); the presence of Csm5 and Cas6 may depend on the processing state of precursor crRNA. Csm with a precursor crRNA does not include Csm5, while Cas6, the enzyme probably involved in pre-crRNA processing, is found associated with a subset of the Csm complex that is probably in the process of pre-crRNA maturation. The Csm complex is elongated and slightly twisted with a maximal length of 215 Angstroms and a diameter of 75-80 Angstroms. It has been modeled to have a central protein filamant of Csm3 subunits along which the dsRNA helix of paired crRNA and target RNA binds. The filament is capped at one end by Cas10 and Csm4 and at the other end by Csm5; ssDNA is thought to bind to the N-terminal HD domain of Cas10.

Its function is as follows. CRISPR (clustered regularly interspaced short palindromic repeat) is an adaptive immune system that provides protection against mobile genetic elements (viruses, transposable elements and conjugative plasmids). CRISPR clusters contain spacers, sequences complementary to antecedent mobile elements, and target invading nucleic acids. CRISPR clusters are transcribed and processed into CRISPR RNA (crRNA). The type III-A Csm effector complex binds crRNA and acts as a crRNA-guided RNase, DNase and cyclic oligoadenylate synthase; binding of target RNA cognate to the crRNA is required for all activities. In a heterologous host this Csm effector complex restricts ssRNA phage MS2, suggesting it may target RNA viruses in vivo. In terms of biological role, csm functions as a non-specific ssDNase. Base-pairing between crRNA and target RNA to form a ternary Csm complex activates a ssDNase activity; target RNA cleavage suppresses the ssDNase, a temporal control that prevents uncontrolled DNA degradation. Viral RNA transcripts probably tether the Csm complex to the viral genome, recruiting Cas10 ssDNA activity which is able to degrade DNA in the transcription bubble, spatially controlling the DNase activity. Functionally, this protein processes pre-crRNA into individual crRNA units. This Streptococcus thermophilus protein is CRISPR-associated endoribonuclease Cas6.